The sequence spans 213 residues: Putative 3-methyladenine DNA glycosylase (213 aa).

The segment at 165 to 187 is disordered; it reads GTPVPPDQVRNGPRTGVSGDGGV.

It belongs to the DNA glycosylase MPG family.

This chain is Putative 3-methyladenine DNA glycosylase, found in Streptomyces avermitilis (strain ATCC 31267 / DSM 46492 / JCM 5070 / NBRC 14893 / NCIMB 12804 / NRRL 8165 / MA-4680).